We begin with the raw amino-acid sequence, 344 residues long: Phosphoribosylformylglycinamidine cyclo-ligase (344 aa).

This sequence belongs to the AIR synthase family.

The protein localises to the cytoplasm. The enzyme catalyses 2-formamido-N(1)-(5-O-phospho-beta-D-ribosyl)acetamidine + ATP = 5-amino-1-(5-phospho-beta-D-ribosyl)imidazole + ADP + phosphate + H(+). The protein operates within purine metabolism; IMP biosynthesis via de novo pathway; 5-amino-1-(5-phospho-D-ribosyl)imidazole from N(2)-formyl-N(1)-(5-phospho-D-ribosyl)glycinamide: step 2/2. This is Phosphoribosylformylglycinamidine cyclo-ligase from Haemophilus influenzae (strain PittEE).